Here is a 182-residue protein sequence, read N- to C-terminus: Inner membrane assembly complex subunit 17 (182 aa).

The transit peptide at Met1–Glu45 directs the protein to the mitochondrion. The Mitochondrial matrix segment spans residues Ile46–Pro107. Residues Leu108–Trp127 traverse the membrane as a helical segment. The stretch at Lys128–Thr158 forms a coiled coil. Residues Lys128–Trp182 lie on the Mitochondrial intermembrane side of the membrane.

This sequence belongs to the INA17 family. In terms of assembly, component of the inner membrane assembly (INA) complex, composed of INA17 and INA22. Interacts with a subset of F(1)F(0)-ATP synthase subunits of the F(1)-domain and the peripheral stalk.

The protein localises to the mitochondrion inner membrane. Component of the INA complex (INAC) that promotes the biogenesis of mitochondrial F(1)F(0)-ATP synthase. INAC facilitates the assembly of the peripheral stalk and promotes the assembly of the catalytic F(1)-domain with the membrane-embedded F(0)-domain. The protein is Inner membrane assembly complex subunit 17 of Saccharomyces cerevisiae (strain RM11-1a) (Baker's yeast).